The following is a 294-amino-acid chain: MFRKIYTNISITLIKQLREASGSPINDCKKALESTDGNFEKAIQYLKERGLAQAEKKMGNQTKQGVIVAYTNNKVAALAEINCETDFVARTSEFLEFSTNFIKTIVNQEQDFSSSNIDSVLNDKRKQLVGKLQENIVIGNLNAFVATKNSVFGVYQHNCLKNTICGLGGSVVELITESELTDVKTQILREGANNLAVTYLGLKPRFLYQHEVSSDVVDQIRKEVEKEFGSKTAQQQNFIVKGKLQNYYSDNVFEHQEYFLNEDEPKTIKQYMAKELEEVIKDKVKIGRCLYLTI.

The protein belongs to the EF-Ts family.

The protein resides in the mitochondrion. Its function is as follows. Associates with the EF-Tu.GDP complex and induces the exchange of GDP to GTP. It remains bound to the aminoacyl-tRNA.EF-Tu.GTP complex up to the GTP hydrolysis stage on the ribosome. This is Elongation factor Ts, mitochondrial 2 from Paramecium tetraurelia.